The sequence spans 210 residues: Quaternary-amine-specific corrinoid protein (210 aa).

In terms of domain architecture, B12-binding N-terminal spans 1-90; the sequence is MADWKNLTQA…VLGSGDTAVA (90 aa). In terms of domain architecture, B12-binding spans 90–210; the sequence is AGTILIGTAH…GVKICQAWVG (121 aa). Histidine 103 contacts methylcob(III)alamin.

The protein belongs to the methylamine corrinoid protein family. As to quaternary structure, the proline betaine:THF methyl transfer system is composed of two methyltransferases, MtpB and MtqA, and the corrinoid protein MtqC. The L-carnitine:THF methyl transfer system is composed of two methyltransferases, MtcB and MtqA, and the corrinoid protein MtqC.

Involved in the degradation of the quaternary amines L-proline betaine and L-carnitine. Component of a corrinoid-dependent methyltransferase system that transfers a methyl group from L-proline betaine or L-carnitine to tetrahydrofolate (THF), forming methyl-THF, a key intermediate in the Wood-Ljungdahl acetogenesis pathway. Acts as a methyl group carrier between MtpB or MtcB, and MtqA. A methyl group from L-proline betaine or L-carnitine is first transferred to the corrinoid prosthetic group of MtqC by MtpB or MtcB, respectively, and then transferred from MtqC to THF by MtqA. The polypeptide is Quaternary-amine-specific corrinoid protein (Eubacterium limosum).